The following is a 356-amino-acid chain: Magnesium-protoporphyrin IX monomethyl ester [oxidative] cyclase (356 aa).

Belongs to the AcsF family. The cofactor is Fe cation.

It catalyses the reaction Mg-protoporphyrin IX 13-monomethyl ester + 3 NADPH + 3 O2 + 2 H(+) = 3,8-divinyl protochlorophyllide a + 3 NADP(+) + 5 H2O. The protein operates within porphyrin-containing compound metabolism; chlorophyll biosynthesis (light-independent). Functionally, catalyzes the formation of the isocyclic ring in chlorophyll biosynthesis. Mediates the cyclase reaction, which results in the formation of divinylprotochlorophyllide (Pchlide) characteristic of all chlorophylls from magnesium-protoporphyrin IX 13-monomethyl ester (MgPMME). The sequence is that of Magnesium-protoporphyrin IX monomethyl ester [oxidative] cyclase from Synechococcus sp. (strain CC9605).